Consider the following 256-residue polypeptide: Probable hydroxyacylglutathione hydrolase SPCC13B11.03c (256 aa).

The Zn(2+) site is built by His-63, His-65, Asp-67, His-68, His-118, and Asp-139. Substrate contacts are provided by residues 148-150 (RFF), 178-180 (HEY), and 250-253 (RTLK). Residue His-178 coordinates Zn(2+).

This sequence belongs to the metallo-beta-lactamase superfamily. Glyoxalase II family. Zn(2+) is required as a cofactor.

It localises to the cytoplasm. The protein localises to the nucleus. It catalyses the reaction an S-(2-hydroxyacyl)glutathione + H2O = a 2-hydroxy carboxylate + glutathione + H(+). The catalysed reaction is (R)-S-lactoylglutathione + H2O = (R)-lactate + glutathione + H(+). The protein operates within secondary metabolite metabolism; methylglyoxal degradation; (R)-lactate from methylglyoxal: step 2/2. Thiolesterase that catalyzes the hydrolysis of S-D-lactoylglutathione to form glutathione and D-lactic acid. Involved in the metabolism of methylglyoxal, a toxic compound for yeast proliferation, by converting methylglyoxal to lactate via S-D-lactoylglutathione by sequential enzyme reactions catalyzed by glyoxalase I and glyoxalase II. This is Probable hydroxyacylglutathione hydrolase SPCC13B11.03c from Schizosaccharomyces pombe (strain 972 / ATCC 24843) (Fission yeast).